The sequence spans 246 residues: DNA polymerase sliding clamp 3 (246 aa).

This sequence belongs to the PCNA family. In terms of assembly, the subunits circularize to form a toroid; DNA passes through its center. Replication factor C (RFC) is required to load the toroid on the DNA. Forms dimeric complexes with PCNA1 and PCNA2, and trimeric complexes with PCNA123 and PCNA323; does not form homotrimers. Crystal structures show a heterotetramer of 2 PCNA2 and 2 PCNA3, which would be large enough to clamp a Holliday junction.

Its function is as follows. Sliding clamp subunit that acts as a moving platform for DNA processing. Responsible for tethering the catalytic subunit of DNA polymerase and other proteins to DNA during high-speed replication. Both trimeric complexes inhibit DNA ligase and both 3'-5' and 5'-3' activity of Hel308 (Hjm) helicase, but stimulate Hjc, the Holliday junction cleavage enzyme. The chain is DNA polymerase sliding clamp 3 from Sulfurisphaera tokodaii (strain DSM 16993 / JCM 10545 / NBRC 100140 / 7) (Sulfolobus tokodaii).